Here is a 78-residue protein sequence, read N- to C-terminus: Large ribosomal subunit protein bL28 (78 aa).

The interval 1–29 (MSAHCQVTGRKPSFGKSVSHSHRRTSRRW) is disordered.

This sequence belongs to the bacterial ribosomal protein bL28 family.

In Corynebacterium glutamicum (strain ATCC 13032 / DSM 20300 / JCM 1318 / BCRC 11384 / CCUG 27702 / LMG 3730 / NBRC 12168 / NCIMB 10025 / NRRL B-2784 / 534), this protein is Large ribosomal subunit protein bL28.